We begin with the raw amino-acid sequence, 286 residues long: Aminoglycoside N(3)-acetyltransferase III (286 aa).

This sequence belongs to the antibiotic N-acetyltransferase family.

It carries out the reaction a 2-deoxystreptamine antibiotic + acetyl-CoA = an N(3)-acetyl-2-deoxystreptamine antibiotic + CoA + H(+). Resistance to antibiotics containing the 2-deoxy-streptamine ring including gentamicin, kanamycin, tobramycin, neomycin and apramycin. This Salmonella sp protein is Aminoglycoside N(3)-acetyltransferase III (aacC3).